The following is a 100-amino-acid chain: MQITDVRIRKISAEGKMKAIVSVTFDNEFVVHDIKVIEGQNGLFIAMPSRKTPTGEFKDIAHPINTETRQKIQKAILDEYEVVKNETTNNENGEEITSED.

Belongs to the SpoVG family.

Its function is as follows. Could be involved in septation. The protein is Putative septation protein SpoVG of Clostridium novyi (strain NT).